The chain runs to 195 residues: Imidazoleglycerol-phosphate dehydratase (195 aa).

The protein belongs to the imidazoleglycerol-phosphate dehydratase family.

It localises to the cytoplasm. It carries out the reaction D-erythro-1-(imidazol-4-yl)glycerol 3-phosphate = 3-(imidazol-4-yl)-2-oxopropyl phosphate + H2O. It participates in amino-acid biosynthesis; L-histidine biosynthesis; L-histidine from 5-phospho-alpha-D-ribose 1-diphosphate: step 6/9. The protein is Imidazoleglycerol-phosphate dehydratase of Azoarcus sp. (strain BH72).